The following is a 156-amino-acid chain: Transcription factor MafF (156 aa).

The tract at residues 51–76 is basic motif; sequence RLKQRRRTLKNRGYAASCRVKRVCQK. Residues 51 to 114 form the bZIP domain; it reads RLKQRRRTLK…DALRGKCEAL (64 aa). Positions 79–93 are leucine-zipper; it reads LQKQKSELEREVDKL.

Belongs to the bZIP family. Maf subfamily. Monomer and homo- or heterodimer. Interacts with MIP. Forms high affinity heterodimers with members of the CNC-bZIP family such as NFE2L1/NRF1. Highly expressed in the lung, lower expression in the brain, thymus, liver, spleen, intestine, kidney, heart, muscle, and ovary. Not significantly expressed in hematopoietic cells.

The protein localises to the nucleus. Functionally, since they lack a putative transactivation domain, the small Mafs behave as transcriptional repressors when they dimerize among themselves. However, they seem to serve as transcriptional activators by dimerizing with other (usually larger) basic-zipper proteins, such as NFE2L1/NRF1, and recruiting them to specific DNA-binding sites. Interacts with the upstream promoter region of the oxytocin receptor gene. May be a transcriptional enhancer in the up-regulation of the oxytocin receptor gene at parturition. The protein is Transcription factor MafF (Maff) of Mus musculus (Mouse).